Reading from the N-terminus, the 859-residue chain is Catenin delta-1 (859 aa).

Residues 15–44 are a coiled coil; that stretch reads SVRAQEAQFELLSRALEEERRHVTAQLDRV. The disordered stretch occupies residues 226-254; it reads IDGPDYATTGRRGANGGDPRRRLRSYEDP. Positions 243–254 are enriched in basic and acidic residues; that stretch reads DPRRRLRSYEDP. ARM repeat units follow at residues 279–317, 320–359, 363–401, 402–446, 464–503, 513–552, 574–614, 621–660, 661–700, and 701–746; these read APNS…HLSY, EDVK…NLSY, RENK…VTGT, LWNL…RVEG, LRNI…LVDS, LRNI…VRRG, AQGY…NLCA, RCIR…NLCG, DNRN…CVIN, and TIHE…GFCL.

This sequence belongs to the beta-catenin family. As to quaternary structure, interacts with C-cadherin and with zbtb33. Ubiquitously expressed.

The protein resides in the cell junction. It localises to the adherens junction. The protein localises to the cytoplasm. Its subcellular location is the nucleus. It is found in the cell membrane. Key regulator of cell-cell adhesion that associates with and regulates the cell adhesion properties of both C-, E- and N-cadherins, being critical for their surface stability. Beside cell-cell adhesion, regulates gene transcription through several transcription factors including ZBTB33/Kaiso2 and GLIS2, and the activity of Rho family GTPases and downstream cytoskeletal dynamics. Implicated both in cell transformation by SRC and in ligand-induced receptor signaling through the EGF, PDGF, CSF-1 and ERBB2 receptors. Required for gastrulation, axial elongation and development of the craniofacial skeleton and eye. This chain is Catenin delta-1 (ctnnd1), found in Xenopus laevis (African clawed frog).